We begin with the raw amino-acid sequence, 55 residues long: Ferredoxin (55 aa).

4Fe-4S ferredoxin-type domains are found at residues 2 to 27 (YKIT…SESD) and 28 to 55 (AVRV…IVEG). [4Fe-4S] cluster is bound by residues Cys-8, Cys-11, Cys-14, Cys-18, Cys-37, Cys-40, Cys-43, and Cys-47.

The cofactor is [4Fe-4S] cluster.

Functionally, ferredoxins are iron-sulfur proteins that transfer electrons in a wide variety of metabolic reactions. This Clostridium sp. (strain M-E) protein is Ferredoxin.